Consider the following 69-residue polypeptide: uncharacterized protein (69 aa).

This is an uncharacterized protein from Saccharolobus islandicus (Sulfolobus islandicus).